A 708-amino-acid polypeptide reads, in one-letter code: Lactotransferrin (708 aa).

An N-terminal signal peptide occupies residues 1–19; the sequence is MKLLFLALLSLLALGPSLA. Transferrin-like domains lie at 25-352 and 364-693; these read VRWC…NLKE and VVWC…NLRQ. Intrachain disulfides connect cysteine 28-cysteine 64 and cysteine 38-cysteine 55. Residue aspartate 79 participates in Fe(3+) binding. Residue arginine 92 is part of the active site. Tyrosine 111 lines the Fe(3+) pocket. 5 disulfides stabilise this stretch: cysteine 134-cysteine 217, cysteine 176-cysteine 192, cysteine 179-cysteine 202, cysteine 189-cysteine 200, and cysteine 250-cysteine 264. Residue threonine 136 coordinates hydrogencarbonate. A glycan (N-linked (GlcNAc...) asparagine) is linked at asparagine 139. Residues arginine 140, alanine 142, and glycine 143 each coordinate hydrogencarbonate. Position 211 (tyrosine 211) interacts with Fe(3+). Residue histidine 272 participates in Fe(3+) binding. Serine 278 acts as the Nucleophile in catalysis. 2 disulfide bridges follow: cysteine 367-cysteine 399 and cysteine 377-cysteine 390. The N-linked (GlcNAc...) asparagine glycan is linked to asparagine 385. Residues aspartate 414 and aspartate 452 each coordinate Fe(3+). 4 cysteine pairs are disulfide-bonded: cysteine 476/cysteine 551, cysteine 510/cysteine 524, cysteine 521/cysteine 534, and cysteine 592/cysteine 606. 4 residues coordinate hydrogencarbonate: threonine 478, arginine 482, alanine 484, and glycine 485. An N-linked (GlcNAc...) asparagine glycan is attached at asparagine 495. Residue tyrosine 545 participates in Fe(3+) binding. A Fe(3+)-binding site is contributed by histidine 614.

The protein belongs to the transferrin family. In terms of assembly, monomer. Found in a complex with LTF, CLU, EPPIN and SEMG1. Interacts with prey activated coagulation factor X; the interaction inhibits coagulation factor X catalytic activity. Found in a complex with MPO and LTF; interacts directly with CP, allows Fe(3+) incorporation into LTF and activation of CP ferroxidase activity. Post-translationally, N-glycosylated. Glycosylation is important for draculin anticoagulant activity. Probably also O-glycosylated. As to expression, expressed in the submaxillary gland and secreted in the saliva (at protein level).

The protein localises to the secreted. Transferrins are iron binding transport proteins which can bind two Fe(3+) ions in association with the binding of an anion, usually bicarbonate. Functionally, major iron-binding and multifunctional protein found in exocrine fluids such as breast milk and mucosal secretions. Has antimicrobial activity. Antimicrobial properties may include bacteriostasis, which is related to its ability to sequester free iron and thus inhibit microbial growth, as well as direct bactericidal properties leading to the release of lipopolysaccharides from the bacterial outer membrane. May have anabolic, differentiating and anti-apoptotic effects on osteoblasts and may also inhibit osteoclastogenesis, possibly playing a role in the regulation of bone growth. May interfere with the lipopolysaccharide (LPS)-stimulated TLR4 signaling. In terms of biological role, the lactotransferrin transferrin-like domain 1 functions as a serine protease of the peptidase S60 family that cuts arginine rich regions. This function contributes to the antimicrobial activity. Shows a preferential cleavage at -Arg-Ser-Arg-Arg-|- and -Arg-Arg-Ser-Arg-|-, and of Z-Phe-Arg-|-aminomethylcoumarin sites. Its function is as follows. Acts as an anticoagulant of the blood coagulation cascade of the bat's prey by inhibiting coagulation factor IX and activated coagulation factor X. This chain is Lactotransferrin, found in Desmodus rotundus (Vampire bat).